The following is a 185-amino-acid chain: Ribosome-recycling factor (185 aa).

The protein belongs to the RRF family.

It localises to the cytoplasm. Functionally, responsible for the release of ribosomes from messenger RNA at the termination of protein biosynthesis. May increase the efficiency of translation by recycling ribosomes from one round of translation to another. This is Ribosome-recycling factor from Geobacillus thermodenitrificans (strain NG80-2).